A 957-amino-acid polypeptide reads, in one-letter code: Glycine dehydrogenase (decarboxylating) (957 aa).

Lys708 carries the post-translational modification N6-(pyridoxal phosphate)lysine.

The protein belongs to the GcvP family. The glycine cleavage system is composed of four proteins: P, T, L and H. It depends on pyridoxal 5'-phosphate as a cofactor.

It carries out the reaction N(6)-[(R)-lipoyl]-L-lysyl-[glycine-cleavage complex H protein] + glycine + H(+) = N(6)-[(R)-S(8)-aminomethyldihydrolipoyl]-L-lysyl-[glycine-cleavage complex H protein] + CO2. Its function is as follows. The glycine cleavage system catalyzes the degradation of glycine. The P protein binds the alpha-amino group of glycine through its pyridoxal phosphate cofactor; CO(2) is released and the remaining methylamine moiety is then transferred to the lipoamide cofactor of the H protein. This chain is Glycine dehydrogenase (decarboxylating), found in Escherichia coli O6:H1 (strain CFT073 / ATCC 700928 / UPEC).